A 956-amino-acid chain; its full sequence is Bifunctional glutamine synthetase adenylyltransferase/adenylyl-removing enzyme (956 aa).

Positions 1 to 450 (MENMSEQALP…YFKETVGGQE (450 aa)) are adenylyl removase. Positions 456-956 (EQWTAQLWSL…IYEQVLNNGQ (501 aa)) are adenylyl transferase.

This sequence belongs to the GlnE family. Requires Mg(2+) as cofactor.

The catalysed reaction is [glutamine synthetase]-O(4)-(5'-adenylyl)-L-tyrosine + phosphate = [glutamine synthetase]-L-tyrosine + ADP. It catalyses the reaction [glutamine synthetase]-L-tyrosine + ATP = [glutamine synthetase]-O(4)-(5'-adenylyl)-L-tyrosine + diphosphate. Involved in the regulation of glutamine synthetase GlnA, a key enzyme in the process to assimilate ammonia. When cellular nitrogen levels are high, the C-terminal adenylyl transferase (AT) inactivates GlnA by covalent transfer of an adenylyl group from ATP to specific tyrosine residue of GlnA, thus reducing its activity. Conversely, when nitrogen levels are low, the N-terminal adenylyl removase (AR) activates GlnA by removing the adenylyl group by phosphorolysis, increasing its activity. The regulatory region of GlnE binds the signal transduction protein PII (GlnB) which indicates the nitrogen status of the cell. The polypeptide is Bifunctional glutamine synthetase adenylyltransferase/adenylyl-removing enzyme (Shewanella loihica (strain ATCC BAA-1088 / PV-4)).